The following is a 558-amino-acid chain: Putative transport protein VC0395_A0715/VC395_1212 (558 aa).

5 helical membrane-spanning segments follow: residues 5–25, 37–57, 66–86, 92–112, and 164–184; these read VVLLLEQNPILLIFVVLAIGL, LGNSIGVLITSLIMGHLGFSF, FMLFIYCVGIEAGPNFFGIFF, YLILSLVVLITATWIAYFGGY, and VGYAMAYLIGLISMIMFAKLL. RCK C-terminal domains are found at residues 203–290 and 291–374; these read RGLG…FRNG and KEVF…KIGF. 6 consecutive transmembrane segments (helical) span residues 384–404, 407–427, 441–461, 476–496, 504–524, and 537–557; these read LLAFCSFFILGILFGLVTMTF, VSFSLGNAVGLLLSGITLGFL, ALNMVKDLGLAIFMVGIGLNA, VIGLAFLVSVVPVVFAYLVGA, ALLFGAIIGARTCAPAMDVVN, and AGTYAIANILMTLTGTIFILL.

Belongs to the AAE transporter (TC 2.A.81) family. YbjL subfamily.

It is found in the cell membrane. This is Putative transport protein VC0395_A0715/VC395_1212 from Vibrio cholerae serotype O1 (strain ATCC 39541 / Classical Ogawa 395 / O395).